The chain runs to 119 residues: Large ribosomal subunit protein bL19 (119 aa).

It belongs to the bacterial ribosomal protein bL19 family.

This protein is located at the 30S-50S ribosomal subunit interface and may play a role in the structure and function of the aminoacyl-tRNA binding site. The polypeptide is Large ribosomal subunit protein bL19 (Pseudarthrobacter chlorophenolicus (strain ATCC 700700 / DSM 12829 / CIP 107037 / JCM 12360 / KCTC 9906 / NCIMB 13794 / A6) (Arthrobacter chlorophenolicus)).